The following is a 387-amino-acid chain: MSTHFDVIVVGAGSMGMAAGYYLAKQGVKTLLVDSFDPPHTNGSHHGDTRIIRHAYGEGREYVPFALRAQELWYELEKETHHKIFTQTGVLVYGPKGGSAFVSETMEAANIHSLEHELFEGKQLTDRWAGVEVPDNYEAIFEPNSGVLFSENCIQAYRELAEAHGATVLTYTPVEDFEVTEDLVTIKTAKGSYTANKLVVSMGAWNSKLLSKLDVEIPLQPYRQVVGFFECDEAKYSNNAHYPAFMVEVENGIYYGFPSFGGSGLKIGYHSYGQQIDPDTINREFGAYPEDEANLRKFLEQYMPGANGELKKGAVCMYTKTPDEHFVIDLHPKYSNVAIAAGFSGHGFKFSSVVGETLAQLATTGKTEHDISIFSLNRDALKKEAVK.

An FAD-binding site is contributed by 6 to 36 (DVIVVGAGSMGMAAGYYLAKQGVKTLLVDSF). Cys316 is subject to S-8alpha-FAD cysteine.

It belongs to the MSOX/MTOX family. MSOX subfamily. Monomer. Requires FAD as cofactor.

The protein localises to the cytoplasm. The enzyme catalyses sarcosine + O2 + H2O = formaldehyde + glycine + H2O2. Its function is as follows. Catalyzes the oxidative demethylation of sarcosine. This Bacillus sp. (strain NS-129) protein is Monomeric sarcosine oxidase (soxA).